A 336-amino-acid chain; its full sequence is Probable long-chain-alcohol O-fatty-acyltransferase 8 (336 aa).

Transmembrane regions (helical) follow at residues 7–27 (SFVKVWGSAIISVSYCYYIPS), 38–58 (SVLPVCVLFLVLPLFFVFTIF), 59–79 (SSTTAFCLSILANFKLILFAF), 82–102 (GPLLPLPANLFRFICFTCLPI), 117–135 (WVFFCKAAIFGVLLNVHNY), 152–172 (LYLVLDVLLTIVNALLTIILG), 228–248 (MGCWTTFFVSGLIHELVYFYI), and 284–304 (PMLSRLITVGFLVVTGYFLFF).

The protein belongs to the wax synthase family.

It localises to the membrane. It catalyses the reaction a long chain fatty alcohol + a fatty acyl-CoA = a wax ester + CoA. Functionally, catalyzes the final step in the synthesis of long-chain linear esters (waxes). This is Probable long-chain-alcohol O-fatty-acyltransferase 8 from Arabidopsis thaliana (Mouse-ear cress).